Consider the following 88-residue polypeptide: MEYQYPMNEDWTTEEAVDVIAFFQQVELAYEKGADREELLKAYRRFKEIVPGKAEEKKLCGEFEEQSTYSPYRTVKQARESDHAKIKM.

Belongs to the UPF0223 family.

The polypeptide is UPF0223 protein YktA (yktA) (Bacillus subtilis (strain 168)).